A 115-amino-acid polypeptide reads, in one-letter code: Non-specific lipid-transfer protein 4.3 (115 aa).

An N-terminal signal peptide occupies residues 1–25 (MARAAATQLVLVAMVAAMLLVATDA). 4 disulfides stabilise this stretch: C29-C77, C39-C54, C55-C97, and C75-C111.

Belongs to the plant LTP family.

In terms of biological role, plant non-specific lipid-transfer proteins transfer phospholipids as well as galactolipids across membranes. May play a role in wax or cutin deposition in the cell walls of expanding epidermal cells and certain secretory tissues. The polypeptide is Non-specific lipid-transfer protein 4.3 (LTP4.3) (Hordeum vulgare (Barley)).